The primary structure comprises 482 residues: Glutamyl-tRNA(Gln) amidotransferase subunit A (482 aa).

Residues Lys75 and Ser150 each act as charge relay system in the active site. The active-site Acyl-ester intermediate is Ser174.

It belongs to the amidase family. GatA subfamily. Heterotrimer of A, B and C subunits.

It catalyses the reaction L-glutamyl-tRNA(Gln) + L-glutamine + ATP + H2O = L-glutaminyl-tRNA(Gln) + L-glutamate + ADP + phosphate + H(+). Its function is as follows. Allows the formation of correctly charged Gln-tRNA(Gln) through the transamidation of misacylated Glu-tRNA(Gln) in organisms which lack glutaminyl-tRNA synthetase. The reaction takes place in the presence of glutamine and ATP through an activated gamma-phospho-Glu-tRNA(Gln). The protein is Glutamyl-tRNA(Gln) amidotransferase subunit A of Acaryochloris marina (strain MBIC 11017).